The chain runs to 456 residues: Argininosuccinate lyase (456 aa).

It belongs to the lyase 1 family. Argininosuccinate lyase subfamily.

Its subcellular location is the cytoplasm. The enzyme catalyses 2-(N(omega)-L-arginino)succinate = fumarate + L-arginine. It participates in amino-acid biosynthesis; L-arginine biosynthesis; L-arginine from L-ornithine and carbamoyl phosphate: step 3/3. This Listeria innocua serovar 6a (strain ATCC BAA-680 / CLIP 11262) protein is Argininosuccinate lyase.